A 244-amino-acid polypeptide reads, in one-letter code: High affinity immunoglobulin epsilon receptor subunit beta (244 aa).

Residues M1–E59 lie on the Cytoplasmic side of the membrane. A helical membrane pass occupies residues F60 to V79. Residues C80–K97 are Extracellular-facing. Residues A98 to I117 traverse the membrane as a helical segment. Residues S118–S130 are Cytoplasmic-facing. A helical membrane pass occupies residues L131 to I150. Over N151 to E180 the chain is Extracellular. A helical transmembrane segment spans residues I181–T200. Residues I201–L244 lie on the Cytoplasmic side of the membrane. A phosphotyrosine mark is found at Y219 and Y225. S226 carries the phosphoserine modification. Phosphotyrosine is present on Y229.

The protein belongs to the MS4A family. In terms of assembly, tetramer of an alpha chain, a beta chain, and two disulfide linked gamma chains. Binds LILRB1. Interacts with FGR, FES/FPS and LYN. Post-translationally, phosphorylated on tyrosine residues by LYN. In terms of tissue distribution, found on the surface of mast cells and basophils.

It is found in the membrane. High affinity receptor that binds to the Fc region of immunoglobulins epsilon. Aggregation of FCER1 by multivalent antigens is required for the full mast cell response, including the release of preformed mediators (such as histamine) by degranulation and de novo production of lipid mediators and cytokines. Also mediates the secretion of important lymphokines. Binding of allergen to receptor-bound IgE leads to cell activation and the release of mediators responsible for the manifestations of allergy. This is High affinity immunoglobulin epsilon receptor subunit beta (MS4A2) from Homo sapiens (Human).